We begin with the raw amino-acid sequence, 424 residues long: CinA-like protein (424 aa).

It belongs to the CinA family.

This Prochlorococcus marinus (strain MIT 9301) protein is CinA-like protein.